The sequence spans 621 residues: uncharacterized protein (621 aa).

An N-terminal signal peptide occupies residues Met1 to Ala15.

The protein belongs to the chlamydial CPn_0512/CT_425/TC_0708 family.

This is an uncharacterized protein from Chlamydia trachomatis serovar D (strain ATCC VR-885 / DSM 19411 / UW-3/Cx).